Reading from the N-terminus, the 153-residue chain is Protein SREK1IP1 (153 aa).

The segment at 13-30 adopts a CCHC-type zinc-finger fold; it reads AGCRKCGYPGHLTFECRN. The disordered stretch occupies residues 44-153; the sequence is VSSTSSEDSD…SPNRSEVTKK (110 aa). S52 is modified (phosphoserine). The segment covering 66–84 has biased composition (basic and acidic residues); sequence QEKRINEEEEKKKEKSREK. The span at 85 to 94 shows a compositional bias: basic residues; that stretch reads IKLKKKRKRS. Residues S96 and S97 each carry the phosphoserine modification. Positions 106–141 are enriched in basic residues; sequence QKKQKYQKKEKKKEKKNKSKKGKHHKKEKKKRKKEK.

As to quaternary structure, interacts with SREK1/SFRS12.

In terms of biological role, possible splicing regulator involved in the control of cellular survival. This is Protein SREK1IP1 (Srek1ip1) from Rattus norvegicus (Rat).